Consider the following 100-residue polypeptide: MKNPLIGGVRFYQRFISPGLPARCRYYPTCSQYMIDAIHTHGSVKGTTMGVARILRCHPFVKGGIDYVPLKFRLTKNPDETYHGPYTYRRNKKTEVEKDG.

The protein belongs to the UPF0161 family.

It localises to the cell membrane. Functionally, could be involved in insertion of integral membrane proteins into the membrane. This chain is Putative membrane protein insertion efficiency factor, found in Enterococcus faecalis (strain ATCC 700802 / V583).